Reading from the N-terminus, the 218-residue chain is Hypoxanthine-guanine phosphoribosyltransferase (218 aa).

An N-acetylalanine modification is found at Ala-2. GMP is bound at residue Lys-69. Lys-103 carries the N6-acetyllysine modification. Lys-115 is covalently cross-linked (Glycyl lysine isopeptide (Lys-Gly) (interchain with G-Cter in SUMO1); alternate). Lys-115 participates in a covalent cross-link: Glycyl lysine isopeptide (Lys-Gly) (interchain with G-Cter in SUMO2); alternate. GMP-binding positions include 134–142 (EDIIDTGKT), Lys-166, 186–188 (KFV), and Asp-194. The Proton acceptor role is filled by Asp-138. A Phosphothreonine modification is found at Thr-142. Residue Asp-194 coordinates Mg(2+).

It belongs to the purine/pyrimidine phosphoribosyltransferase family. As to quaternary structure, homotetramer. Mg(2+) serves as cofactor.

It is found in the cytoplasm. The enzyme catalyses IMP + diphosphate = hypoxanthine + 5-phospho-alpha-D-ribose 1-diphosphate. It carries out the reaction GMP + diphosphate = guanine + 5-phospho-alpha-D-ribose 1-diphosphate. The protein operates within purine metabolism; IMP biosynthesis via salvage pathway; IMP from hypoxanthine: step 1/1. Its function is as follows. Converts guanine to guanosine monophosphate, and hypoxanthine to inosine monophosphate. Transfers the 5-phosphoribosyl group from 5-phosphoribosylpyrophosphate onto the purine. Plays a central role in the generation of purine nucleotides through the purine salvage pathway. This is Hypoxanthine-guanine phosphoribosyltransferase (HPRT1) from Bos taurus (Bovine).